A 337-amino-acid chain; its full sequence is Protein hairy (337 aa).

The tract at residues 29–48 (KSDRRSNKPIMEKRRRARIN) is interaction with Topors. The bHLH domain occupies 31–88 (DRRSNKPIMEKRRRARINNCLNELKTLILDATKKDPARHSKLEKADILEKTVKHLQEL). The Orange domain maps to 107-136 (FKAGFADCVNEVSRFPGIEPAQRRRLLQHL). Disordered stretches follow at residues 146 to 178 (ELHQ…SQQG) and 259 to 311 (MPQR…VIQR). A compositionally biased stretch (low complexity) spans 263-301 (TASTGSASSHSSAGYESAPGSSSSCSYAPPSPANSSYEP). The WRPW motif motif lies at 334–337 (WRPW).

Transcription repression requires formation of a complex with a corepressor protein (Groucho). Interacts with gro (via WPRW motif) and Topors. Post-translationally, ubiquitinated by Topors.

It is found in the nucleus. Functionally, pair-rule protein that regulates embryonic segmentation and adult bristle patterning. Transcriptional repressor of genes that require a bHLH protein for their transcription (e.g. ftz). In Drosophila melanogaster (Fruit fly), this protein is Protein hairy.